The primary structure comprises 455 residues: Pup--protein ligase (455 aa).

Glu10 is a Mg(2+) binding site. Arg55 contacts ATP. A Mg(2+)-binding site is contributed by Tyr57. The Proton acceptor role is filled by Asp59. Glu65 contributes to the Mg(2+) binding site. Residues Thr68 and Trp422 each coordinate ATP.

The protein belongs to the Pup ligase/Pup deamidase family. Pup-conjugating enzyme subfamily.

It carries out the reaction ATP + [prokaryotic ubiquitin-like protein]-L-glutamate + [protein]-L-lysine = ADP + phosphate + N(6)-([prokaryotic ubiquitin-like protein]-gamma-L-glutamyl)-[protein]-L-lysine.. It functions in the pathway protein degradation; proteasomal Pup-dependent pathway. It participates in protein modification; protein pupylation. Catalyzes the covalent attachment of the prokaryotic ubiquitin-like protein modifier Pup to the proteasomal substrate proteins, thereby targeting them for proteasomal degradation. This tagging system is termed pupylation. The ligation reaction involves the side-chain carboxylate of the C-terminal glutamate of Pup and the side-chain amino group of a substrate lysine. The sequence is that of Pup--protein ligase from Sanguibacter keddieii (strain ATCC 51767 / DSM 10542 / NCFB 3025 / ST-74).